Here is a 243-residue protein sequence, read N- to C-terminus: UPF0246 protein SpyM51747 (243 aa).

This sequence belongs to the UPF0246 family.

The protein is UPF0246 protein SpyM51747 of Streptococcus pyogenes serotype M5 (strain Manfredo).